We begin with the raw amino-acid sequence, 302 residues long: Nuclear egress protein 1 (302 aa).

The span at 1-17 (MPKSVSSHISLATSTGR) shows a compositional bias: polar residues. Residues 1 to 22 (MPKSVSSHISLATSTGRSGPRD) are disordered. The segment at 102–227 (CVSLSPFGHS…CILFKTRALH (126 aa)) adopts a CCCH-type zinc-finger fold.

Belongs to the herpesviridae NEC1 protein family. Forms a heterohexameric complex with NEC2. Interacts with capsid vertex specific component 2/CVC2; this interaction directs the capsid to the host inner nuclear membrane to initiate budding. Phosphorylated at serine residues in the N-terminus. This phosphorylation regulates the localization within the inner nuclear membrane.

The protein resides in the host nucleus inner membrane. In terms of biological role, plays an essential role in virion nuclear egress, the first step of virion release from infected cell. Within the host nucleus, NEC1 interacts with the newly formed capsid through the vertexes and directs it to the inner nuclear membrane by associating with NEC2. Induces the budding of the capsid at the inner nuclear membrane as well as its envelopment into the perinuclear space. There, the NEC1/NEC2 complex promotes the fusion of the enveloped capsid with the outer nuclear membrane and the subsequent release of the viral capsid into the cytoplasm where it will reach the secondary budding sites in the host Golgi or trans-Golgi network. The sequence is that of Nuclear egress protein 1 from Homo sapiens (Human).